A 308-amino-acid chain; its full sequence is uncharacterized protein (308 aa).

This is an uncharacterized protein from Mycoplasmoides gallisepticum (strain R(low / passage 15 / clone 2)) (Mycoplasma gallisepticum).